The sequence spans 204 residues: Fluoride-specific ion channel FluC 3 (204 aa).

Residues 1–16 are compositionally biased toward basic and acidic residues; that stretch reads MRADESGPERESREPT. Residues 1-53 form a disordered region; it reads MRADESGPERESREPTHIPGAEPELGGEPTPRGEPGPGFEPGPGGEPAPSRAP. The segment covering 32 to 46 has biased composition (pro residues); sequence RGEPGPGFEPGPGGE. A run of 4 helical transmembrane segments spans residues 62–82, 96–116, 125–145, and 158–178; these read VLAAVALGGVLGGSARYALGL, FAVNVSGAFLLALLLVYVLEI, PFAAVGFLGSFTTFSTWMVDT, and AFNVFGSLFAGLAATGLGLAI. Residues Gly133 and Thr136 each contribute to the Na(+) site.

This sequence belongs to the fluoride channel Fluc/FEX (TC 1.A.43) family.

It is found in the cell membrane. It carries out the reaction fluoride(in) = fluoride(out). Na(+) is not transported, but it plays an essential structural role and its presence is essential for fluoride channel function. Fluoride-specific ion channel. Important for reducing fluoride concentration in the cell, thus reducing its toxicity. In Streptomyces avermitilis (strain ATCC 31267 / DSM 46492 / JCM 5070 / NBRC 14893 / NCIMB 12804 / NRRL 8165 / MA-4680), this protein is Fluoride-specific ion channel FluC 3.